The following is a 265-amino-acid chain: Undecaprenyl-diphosphatase (265 aa).

A run of 7 helical transmembrane segments spans residues 38 to 58 (SDMF…IIYW), 80 to 100 (LIVA…LGFE), 107 to 127 (PIAW…WAAA), 135 to 155 (ITWL…VFPG), 178 to 198 (TEFA…YELL), 216 to 236 (IAFV…LAYI), and 244 to 264 (FAIY…TGLI).

This sequence belongs to the UppP family.

It is found in the cell inner membrane. It catalyses the reaction di-trans,octa-cis-undecaprenyl diphosphate + H2O = di-trans,octa-cis-undecaprenyl phosphate + phosphate + H(+). Functionally, catalyzes the dephosphorylation of undecaprenyl diphosphate (UPP). Confers resistance to bacitracin. The protein is Undecaprenyl-diphosphatase of Rhizobium johnstonii (strain DSM 114642 / LMG 32736 / 3841) (Rhizobium leguminosarum bv. viciae).